A 186-amino-acid chain; its full sequence is uncharacterized protein (186 aa).

The disordered stretch occupies residues aspartate 156–aspartate 186. Over residues histidine 173–aspartate 186 the composition is skewed to basic and acidic residues.

This is an uncharacterized protein from Bacillus subtilis (strain 168).